The following is a 376-amino-acid chain: 4-hydroxy-3-methylbut-2-en-1-yl diphosphate synthase (flavodoxin) (376 aa).

[4Fe-4S] cluster is bound by residues cysteine 272, cysteine 275, cysteine 307, and glutamate 314.

Belongs to the IspG family. Requires [4Fe-4S] cluster as cofactor.

The catalysed reaction is (2E)-4-hydroxy-3-methylbut-2-enyl diphosphate + oxidized [flavodoxin] + H2O + 2 H(+) = 2-C-methyl-D-erythritol 2,4-cyclic diphosphate + reduced [flavodoxin]. Its pathway is isoprenoid biosynthesis; isopentenyl diphosphate biosynthesis via DXP pathway; isopentenyl diphosphate from 1-deoxy-D-xylulose 5-phosphate: step 5/6. Functionally, converts 2C-methyl-D-erythritol 2,4-cyclodiphosphate (ME-2,4cPP) into 1-hydroxy-2-methyl-2-(E)-butenyl 4-diphosphate. The sequence is that of 4-hydroxy-3-methylbut-2-en-1-yl diphosphate synthase (flavodoxin) from Blochmanniella pennsylvanica (strain BPEN).